Reading from the N-terminus, the 308-residue chain is Probable GTP 3',8-cyclase (308 aa).

The Radical SAM core domain occupies 4–224; it reads RFGRPLEDLR…QIRKKHFRPR (221 aa). A GTP-binding site is contributed by R13. The [4Fe-4S] cluster site is built by C20, C24, and C27. K60 serves as a coordination point for GTP. G64 provides a ligand contact to S-adenosyl-L-methionine. T90 contributes to the GTP binding site. S114 is a binding site for S-adenosyl-L-methionine. K151 contributes to the GTP binding site. Residues C245 and C248 each contribute to the [4Fe-4S] cluster site. GTP is bound at residue 250–252; that stretch reads RIR. C262 provides a ligand contact to [4Fe-4S] cluster.

Belongs to the radical SAM superfamily. MoaA family. [4Fe-4S] cluster is required as a cofactor.

It carries out the reaction GTP + AH2 + S-adenosyl-L-methionine = (8S)-3',8-cyclo-7,8-dihydroguanosine 5'-triphosphate + 5'-deoxyadenosine + L-methionine + A + H(+). It functions in the pathway cofactor biosynthesis; molybdopterin biosynthesis. Its function is as follows. Catalyzes the cyclization of GTP to (8S)-3',8-cyclo-7,8-dihydroguanosine 5'-triphosphate. The sequence is that of Probable GTP 3',8-cyclase from Saccharolobus islandicus (strain Y.N.15.51 / Yellowstone #2) (Sulfolobus islandicus).